Reading from the N-terminus, the 1274-residue chain is Clustered mitochondria protein homolog (1274 aa).

A disordered region spans residues 1-53; sequence MAQTNGELEHSKGMSSPAVRISQAQKSTKLTVDPESPEQVANGTHAEGEQPEE. TPR repeat units follow at residues 293-326, 510-543, and 628-661; these read SPSFNSSFEALQEANNQKDLLTTFPFQNAIPNNP, DYGGVEGKDVVATHPDFVPVFEKLSKALRIKKHP, and AKEAAKKEQSETAEPKEEGAEEKSEEALDQERVD. Positions 342 to 586 constitute a Clu domain; the sequence is DITRSQENYL…RVTPLDVMWQ (245 aa). 2 disordered regions span residues 631–655 and 893–925; these read AAKKEQSETAEPKEEGAEEKSEEAL and VSNGVNGAGHDDSNSNKKKKKKGGDSNSPARAA. 4 TPR repeats span residues 998-1031, 1040-1073, 1082-1115, and 1124-1157; these read AKLYHQLSMLYYQTDEKEAAVELARKAVIVTERT, ILSYLNLSLFEHASGNTKTALVYIKHAMDLWKII, ITTMNNAAVMLQHLKQYSDSRKWFEASLVVCESL, and ATILFQLAQALALDQDSKGAVGKMRDAYNIFLQQ. The tract at residues 1197-1274 is disordered; that stretch reads INMTPRTLGT…KLRGSKKSSA (78 aa). Polar residues predominate over residues 1200 to 1217; that stretch reads TPRTLGTRVQPQVGQTAP.

This sequence belongs to the CLU family. As to quaternary structure, may associate with the eukaryotic translation initiation factor 3 (eIF-3) complex.

Its subcellular location is the cytoplasm. Functionally, mRNA-binding protein involved in proper cytoplasmic distribution of mitochondria. The protein is Clustered mitochondria protein homolog of Aspergillus terreus (strain NIH 2624 / FGSC A1156).